Consider the following 373-residue polypeptide: Cytoplasmic tRNA 2-thiolation protein 1 (373 aa).

This sequence belongs to the TtcA family. CTU1/NCS6/ATPBD3 subfamily.

The protein resides in the cytoplasm. The protein operates within tRNA modification; 5-methoxycarbonylmethyl-2-thiouridine-tRNA biosynthesis. Plays a central role in 2-thiolation of mcm(5)S(2)U at tRNA wobble positions of tRNA(Lys), tRNA(Glu) and tRNA(Gln). Directly binds tRNAs and probably acts by catalyzing adenylation of tRNAs, an intermediate required for 2-thiolation. It is unclear whether it acts as a sulfurtransferase that transfers sulfur from thiocarboxylated URM1 onto the uridine of tRNAs at wobble position. Prior mcm(5) tRNA modification by the elongator complex is required for 2-thiolation. May also be involved in protein urmylation. The polypeptide is Cytoplasmic tRNA 2-thiolation protein 1 (Eremothecium gossypii (strain ATCC 10895 / CBS 109.51 / FGSC 9923 / NRRL Y-1056) (Yeast)).